Consider the following 191-residue polypeptide: dCTP deaminase, dUMP-forming (191 aa).

Residues 101–106, aspartate 119, 127–129, glutamine 148, tyrosine 162, and glutamine 174 each bind dCTP; these read KSSLGR and TLE. The active-site Proton donor/acceptor is glutamate 129. The interval 169–191 is disordered; that stretch reads NRYQGQRGPTASRSHLNFHRTRI. A compositionally biased stretch (polar residues) spans 171 to 183; sequence YQGQRGPTASRSH.

The protein belongs to the dCTP deaminase family. As to quaternary structure, homotrimer.

The enzyme catalyses dCTP + 2 H2O = dUMP + NH4(+) + diphosphate. It functions in the pathway pyrimidine metabolism; dUMP biosynthesis; dUMP from dCTP: step 1/1. In terms of biological role, bifunctional enzyme that catalyzes both the deamination of dCTP to dUTP and the hydrolysis of dUTP to dUMP without releasing the toxic dUTP intermediate. This Pseudarthrobacter chlorophenolicus (strain ATCC 700700 / DSM 12829 / CIP 107037 / JCM 12360 / KCTC 9906 / NCIMB 13794 / A6) (Arthrobacter chlorophenolicus) protein is dCTP deaminase, dUMP-forming.